The chain runs to 937 residues: Isoleucine--tRNA ligase (937 aa).

The 'HIGH' region motif lies at 58–68; the sequence is PYANGNIHIGH. Residue Glu-560 coordinates L-isoleucyl-5'-AMP. Positions 601–605 match the 'KMSKS' region motif; it reads KMSKS. An ATP-binding site is contributed by Lys-604. Zn(2+) is bound by residues Cys-900, Cys-903, Cys-920, and Cys-923.

It belongs to the class-I aminoacyl-tRNA synthetase family. IleS type 1 subfamily. In terms of assembly, monomer. Requires Zn(2+) as cofactor.

It localises to the cytoplasm. The enzyme catalyses tRNA(Ile) + L-isoleucine + ATP = L-isoleucyl-tRNA(Ile) + AMP + diphosphate. Functionally, catalyzes the attachment of isoleucine to tRNA(Ile). As IleRS can inadvertently accommodate and process structurally similar amino acids such as valine, to avoid such errors it has two additional distinct tRNA(Ile)-dependent editing activities. One activity is designated as 'pretransfer' editing and involves the hydrolysis of activated Val-AMP. The other activity is designated 'posttransfer' editing and involves deacylation of mischarged Val-tRNA(Ile). This chain is Isoleucine--tRNA ligase, found in Thioalkalivibrio sulfidiphilus (strain HL-EbGR7).